The sequence spans 777 residues: MTAGSVCVPQIIPLRVPQPGKANHEIDNNTLLEMKSDTPDVNIYYTLDGSKPEFLKRTGYVENNTFKYTKPITLPDGKIQVKAIAVSKDCRQSGIVTKVFQVGYEPPNVVSPEDNVENVLKDSSRQEFKNGLVGSKLKKKYQNSENQRSWNVNLRKFPDLQVGERTDPKTLKDLRFSESPLEIPAHSGGSGSRPPTRQSQSPGFAHISGLKCLTSTEIMRIQRETDFLKCAHCLAPRPSDPFARFCQECGSPVPPIFGCRLPPPEGAQMGLCAECRSLVPMNTPICVVCEAPLALQLQPQASLHLKEKVICRACGTGNPAHLRYCVTCEGALPSSQESICSGDKASPLPTQKGGTISCSRCGRWNLWEASFCGWCGAMLGIPAGCSVCPKCGASNHLSARFCGSCGICVKSLVKLSLDRSLALAAQEPRPFSEPQCAWQSLNIPLPRSDAGTKRDIGTQTVGLFYPSGKLLAKKELEIASQKQRQEKMSDHKPLLTAISPGRGYWRRQLDHISAHLRCYAQNNPEFRALIAEPRMGKLISATVHEDGCEVSIRLNYSQVSNKNLYLNKAVNFSDHLLSSAAEGDGGLCGSRSSWVSDYSQSTSDTIEKIKRIRNFKTKTFQEKEEQLLPENRLLLKEVGPTGEGRVSVIEQLLDEGADPNCCDEDNRPVITVAVMNKHHEAIPVLVQRGADIDQQWGPLRNTALHEATLLGFAGRESIATLLGCNASIRKKNAGGQTAYDLALNTGDDLITSLFAAKFGQGLEDQLAQTRSLRLDDC.

A compositionally biased stretch (basic and acidic residues) spans 161 to 176 (QVGERTDPKTLKDLRF). A disordered region spans residues 161–202 (QVGERTDPKTLKDLRFSESPLEIPAHSGGSGSRPPTRQSQSP). Residues 193–202 (RPPTRQSQSP) show a composition bias toward polar residues. Position 201 is a phosphoserine (serine 201). DZANK-type zinc fingers lie at residues 230–289 (CAHC…CVVC) and 358–406 (CSRC…GSCG). ANK repeat units follow at residues 442 to 473 (NIPL…LLAK) and 477 to 506 (EIAS…GYWR).

Interacts with NINL. Associates with DYNC1H1 and multiple dynein intermediate and light chains as well as actin-binding proteins.

It localises to the cytoplasm. Its subcellular location is the cytoskeleton. The protein localises to the microtubule organizing center. It is found in the centrosome. The protein resides in the cilium basal body. Functionally, involved in vesicle transport in photoreceptor cells. In Macaca fascicularis (Crab-eating macaque), this protein is Double zinc ribbon and ankyrin repeat-containing protein 1 (DZANK1).